We begin with the raw amino-acid sequence, 791 residues long: Protein FAM47A (791 aa).

3 disordered regions span residues Pro-195–Arg-257, Glu-274–Cys-409, and Val-449–Pro-573. 2 stretches are compositionally biased toward basic and acidic residues: residues Glu-274–Asp-288 and Gly-333–Ser-342. The span at Ser-349–Gly-358 shows a compositional bias: polar residues. Residues Val-449 to Pro-462 are compositionally biased toward basic and acidic residues.

This sequence belongs to the FAM47 family.

This Homo sapiens (Human) protein is Protein FAM47A (FAM47A).